The chain runs to 485 residues: Cysteine--tRNA ligase (485 aa).

Cys27 is a binding site for Zn(2+). A 'HIGH' region motif is present at residues 29 to 39 (ITAYDFSHIGH). Residues Cys208, His233, and Glu237 each coordinate Zn(2+). The short motif at 265–269 (KMSKS) is the 'KMSKS' region element. Lys268 is an ATP binding site.

This sequence belongs to the class-I aminoacyl-tRNA synthetase family. In terms of assembly, monomer. It depends on Zn(2+) as a cofactor.

It localises to the cytoplasm. The catalysed reaction is tRNA(Cys) + L-cysteine + ATP = L-cysteinyl-tRNA(Cys) + AMP + diphosphate. The polypeptide is Cysteine--tRNA ligase (Lawsonia intracellularis (strain PHE/MN1-00)).